Consider the following 77-residue polypeptide: Conotoxin PnMEKL-04 (77 aa).

The N-terminal stretch at 1-19 is a signal peptide; that stretch reads MEKLTILLLVAAVLMSTQA. A propeptide spanning residues 20–45 is cleaved from the precursor; it reads LPQGGGENRLKENIKFLLKRKTAADR. Cystine bridges form between Cys51–Cys65, Cys58–Cys69, and Cys64–Cys73.

This sequence belongs to the conotoxin O2 superfamily. As to expression, expressed by the venom duct.

The protein localises to the secreted. The polypeptide is Conotoxin PnMEKL-04 (Conus pennaceus (Feathered cone)).